Reading from the N-terminus, the 301-residue chain is Protoheme IX farnesyltransferase (301 aa).

A run of 9 helical transmembrane segments spans residues 29-49 (VVAL…PGTV), 51-71 (LVPL…AAAF), 96-116 (ISII…FIIL), 123-143 (LTAW…TAYL), 151-171 (IVVG…AVTG), 177-197 (ALLL…ALAI), 223-243 (CIFL…LVGM), 244-264 (CGPV…YKAW), and 281-301 (FSIY…YLWV).

This sequence belongs to the UbiA prenyltransferase family. Protoheme IX farnesyltransferase subfamily.

It localises to the cell inner membrane. The catalysed reaction is heme b + (2E,6E)-farnesyl diphosphate + H2O = Fe(II)-heme o + diphosphate. It participates in porphyrin-containing compound metabolism; heme O biosynthesis; heme O from protoheme: step 1/1. Functionally, converts heme B (protoheme IX) to heme O by substitution of the vinyl group on carbon 2 of heme B porphyrin ring with a hydroxyethyl farnesyl side group. In Shewanella pealeana (strain ATCC 700345 / ANG-SQ1), this protein is Protoheme IX farnesyltransferase.